The primary structure comprises 401 residues: Chorismate synthase (401 aa).

2 residues coordinate NADP(+): arginine 40 and arginine 46. Residues 135-137 (RAS), 256-257 (QA), glycine 300, 315-319 (KPIST), and arginine 341 each bind FMN.

Belongs to the chorismate synthase family. As to quaternary structure, homotetramer. It depends on FMNH2 as a cofactor.

It catalyses the reaction 5-O-(1-carboxyvinyl)-3-phosphoshikimate = chorismate + phosphate. It functions in the pathway metabolic intermediate biosynthesis; chorismate biosynthesis; chorismate from D-erythrose 4-phosphate and phosphoenolpyruvate: step 7/7. Its function is as follows. Catalyzes the anti-1,4-elimination of the C-3 phosphate and the C-6 proR hydrogen from 5-enolpyruvylshikimate-3-phosphate (EPSP) to yield chorismate, which is the branch point compound that serves as the starting substrate for the three terminal pathways of aromatic amino acid biosynthesis. This reaction introduces a second double bond into the aromatic ring system. This is Chorismate synthase from Mycobacterium avium (strain 104).